A 556-amino-acid chain; its full sequence is Formate--tetrahydrofolate ligase (556 aa).

64–71 (TPAGEGKT) lines the ATP pocket.

This sequence belongs to the formate--tetrahydrofolate ligase family.

It carries out the reaction (6S)-5,6,7,8-tetrahydrofolate + formate + ATP = (6R)-10-formyltetrahydrofolate + ADP + phosphate. Its pathway is one-carbon metabolism; tetrahydrofolate interconversion. The chain is Formate--tetrahydrofolate ligase from Haemophilus ducreyi (strain 35000HP / ATCC 700724).